The primary structure comprises 310 residues: MLGKVNGVQIECLESMVINSREIYGKFMIEPLSYGQAITVGNALRRVLLSDVPGVTIVSVRIAGINHEFSTVKGVKEDVLEILLNLKNIVLKGNVLKNQIGRLKVQGPAIVTSGQIEFPLDITVVDPCQYIATISGNDYLEMELKVEKSSGYKLVETFSKKSPLDFLPIDSIFMPVKKVNYYVEEILDSKVAYEKLILELWTNGSLSPQQSINYASDNLVKLFNPLRVLDFSKESSSVYEQNSLIKQKLIEELCLSVRAYNCLKRVQVDSIGDLLEYSIGDLLEIKNFGQKSVEEVSKALYKKFGVKLKH.

Residues Met1–Asp230 form an alpha N-terminal domain (alpha-NTD) region. An alpha C-terminal domain (alpha-CTD) region spans residues Asn242 to His310.

It belongs to the RNA polymerase alpha chain family. As to quaternary structure, in plastids the minimal PEP RNA polymerase catalytic core is composed of four subunits: alpha, beta, beta', and beta''. When a (nuclear-encoded) sigma factor is associated with the core the holoenzyme is formed, which can initiate transcription.

The protein resides in the plastid. Its subcellular location is the chloroplast. It carries out the reaction RNA(n) + a ribonucleoside 5'-triphosphate = RNA(n+1) + diphosphate. Functionally, DNA-dependent RNA polymerase catalyzes the transcription of DNA into RNA using the four ribonucleoside triphosphates as substrates. In Cyanidium caldarium (Red alga), this protein is DNA-directed RNA polymerase subunit alpha.